Consider the following 264-residue polypeptide: Phosphonoacetaldehyde hydrolase (264 aa).

Aspartate 9 serves as the catalytic Nucleophile. Mg(2+) is bound by residues aspartate 9 and alanine 11. Lysine 50 acts as the Schiff-base intermediate with substrate in catalysis. Aspartate 183 provides a ligand contact to Mg(2+).

The protein belongs to the HAD-like hydrolase superfamily. PhnX family. Homodimer. Mg(2+) serves as cofactor.

It catalyses the reaction phosphonoacetaldehyde + H2O = acetaldehyde + phosphate + H(+). Involved in phosphonate degradation. The sequence is that of Phosphonoacetaldehyde hydrolase (phnX) from Bacillus cereus.